A 380-amino-acid chain; its full sequence is Cytochrome b (380 aa).

4 consecutive transmembrane segments (helical) span residues 34-54 (FGSLLGICLITQILTGLLLAA), 78-99 (WLIRNLHANGASFFFICIYLHI), 114-134 (WNTGVTLLLTLMATAFVGYVL), and 179-199 (FFALHFLLPFMIAGLTLIHLT). The heme b site is built by H84 and H98. Heme b-binding residues include H183 and H197. H202 provides a ligand contact to a ubiquinone. Transmembrane regions (helical) follow at residues 227-247 (LKDILGFAIMLLLLTTLALFS), 289-309 (LGGVLALAASVLILFLTPFLH), 321-341 (LSQLLFWLLVANLLILTWVGS), and 348-368 (FIIIGQMASITYFIIILVLFP).

The protein belongs to the cytochrome b family. As to quaternary structure, the cytochrome bc1 complex contains 11 subunits: 3 respiratory subunits (MT-CYB, CYC1 and UQCRFS1), 2 core proteins (UQCRC1 and UQCRC2) and 6 low-molecular weight proteins (UQCRH/QCR6, UQCRB/QCR7, UQCRQ/QCR8, UQCR10/QCR9, UQCR11/QCR10 and a cleavage product of UQCRFS1). This cytochrome bc1 complex then forms a dimer. Heme b serves as cofactor.

Its subcellular location is the mitochondrion inner membrane. Its function is as follows. Component of the ubiquinol-cytochrome c reductase complex (complex III or cytochrome b-c1 complex) that is part of the mitochondrial respiratory chain. The b-c1 complex mediates electron transfer from ubiquinol to cytochrome c. Contributes to the generation of a proton gradient across the mitochondrial membrane that is then used for ATP synthesis. This Pharomachrus antisianus (Crested quetzal) protein is Cytochrome b (MT-CYB).